A 208-amino-acid polypeptide reads, in one-letter code: Outer-membrane lipoprotein LolB (208 aa).

Residues Met1 to Ala23 form the signal peptide. The N-palmitoyl cysteine moiety is linked to residue Cys24. Residue Cys24 is the site of S-diacylglycerol cysteine attachment.

This sequence belongs to the LolB family. As to quaternary structure, monomer.

It localises to the cell outer membrane. Functionally, plays a critical role in the incorporation of lipoproteins in the outer membrane after they are released by the LolA protein. This Photorhabdus laumondii subsp. laumondii (strain DSM 15139 / CIP 105565 / TT01) (Photorhabdus luminescens subsp. laumondii) protein is Outer-membrane lipoprotein LolB.